The sequence spans 595 residues: 73 kDa paraflagellar rod protein (595 aa).

Positions 294-317 are disordered; the sequence is DAEATKRHAANKEKSDRYIRENED. The tract at residues 317-337 is calmodulin-binding; sequence DRQEETWNKIQDLERQLQKLG.

In terms of assembly, heterodimer of a 69 kDa and a 73 kDa protein.

Its subcellular location is the cell projection. The protein localises to the cilium. The protein resides in the flagellum. It is found in the cytoplasm. It localises to the cytoskeleton. Its function is as follows. Major component of the paraflagellar rod (PFR). The PFR is a highly ordered lattices of fibrous proteins that are located inside the flagellum and assume a fixed orientation with respect to the microtubular axoneme. The polypeptide is 73 kDa paraflagellar rod protein (PFRC) (Trypanosoma brucei brucei).